The sequence spans 242 residues: UPF0309 protein Oant_1457 (242 aa).

Residues 30–214 (AAELITAAAL…AKLVGKGDAP (185 aa)) enclose the SIS domain.

Belongs to the UPF0309 family.

The polypeptide is UPF0309 protein Oant_1457 (Brucella anthropi (strain ATCC 49188 / DSM 6882 / CCUG 24695 / JCM 21032 / LMG 3331 / NBRC 15819 / NCTC 12168 / Alc 37) (Ochrobactrum anthropi)).